Consider the following 385-residue polypeptide: Benzoate O-methyltransferase (385 aa).

Tyr18 is an S-adenosyl-L-homocysteine binding site. Gln25 lines the benzoate pocket. Cys59, Asn64, Asp106, Leu107, Ser145, and Tyr146 together coordinate S-adenosyl-L-homocysteine. A benzoate-binding site is contributed by Trp167. Residues Asn184, Glu270, Phe272, and Asn273 each contribute to the Mg(2+) site.

Belongs to the methyltransferase superfamily. Type-7 methyltransferase family. SABATH subfamily. The cofactor is Mg(2+).

The catalysed reaction is benzoate + S-adenosyl-L-methionine = methyl benzoate + S-adenosyl-L-homocysteine. In terms of biological role, methyltransferase involved in the biosynthesis of methyl benzoate in response to stresses. Utilizes exclusively benzoic acid (BA) as substrate. In Zea mays (Maize), this protein is Benzoate O-methyltransferase (OMT8).